The sequence spans 241 residues: Outer membrane protein assembly factor BamD (241 aa).

The N-terminal stretch at 1-17 (MKYQTLSGLLALSLLFG) is a signal peptide. Cys18 carries N-palmitoyl cysteine lipidation. Residue Cys18 is the site of S-diacylglycerol cysteine attachment.

Belongs to the BamD family. In terms of assembly, part of the Bam complex.

It is found in the cell outer membrane. Functionally, part of the outer membrane protein assembly complex, which is involved in assembly and insertion of beta-barrel proteins into the outer membrane. This Vibrio cholerae serotype O1 (strain ATCC 39315 / El Tor Inaba N16961) protein is Outer membrane protein assembly factor BamD.